The sequence spans 700 residues: Peroxisomal acyl-coenzyme A oxidase 3 (700 aa).

At Ala2 the chain carries N-acetylalanine. Position 281 is a phosphothreonine (Thr281). The short motif at 698 to 700 is the Microbody targeting signal element; sequence SKL.

This sequence belongs to the acyl-CoA oxidase family. FAD serves as cofactor.

The protein resides in the peroxisome. It catalyses the reaction a 2,3-saturated acyl-CoA + O2 = a (2E)-enoyl-CoA + H2O2. The enzyme catalyses (2S)-pristanoyl-CoA + O2 = (2E)-pristenoyl-CoA + H2O2. The catalysed reaction is tetracosanoyl-CoA + O2 = (2E)-tetracosenoyl-CoA + H2O2. It carries out the reaction hexadecanoyl-CoA + O2 = (2E)-hexadecenoyl-CoA + H2O2. It catalyses the reaction hexadecanedioyl-CoA + O2 = (2E)-hexadecenedioyl-CoA + H2O2. Its pathway is lipid metabolism; peroxisomal fatty acid beta-oxidation. Oxidizes the CoA-esters of 2-methyl-branched fatty acids. In Homo sapiens (Human), this protein is Peroxisomal acyl-coenzyme A oxidase 3 (ACOX3).